Consider the following 565-residue polypeptide: Bicyclogermacrene synthase (565 aa).

Residues D317, D321, D461, and E469 each coordinate Mg(2+). Positions 317 to 321 match the DDXXD motif motif; that stretch reads DDTFD.

The protein belongs to the terpene synthase family. Mg(2+) is required as a cofactor.

The catalysed reaction is (2E,6E)-farnesyl diphosphate = bicyclogermacrene + diphosphate. The protein operates within secondary metabolite biosynthesis; terpenoid biosynthesis. In terms of biological role, sesquiterpene synthase converting farnesyl diphosphate to bicyclogermacrene as the major product. The polypeptide is Bicyclogermacrene synthase (Phyla dulcis (Aztec sweet herb)).